A 376-amino-acid polypeptide reads, in one-letter code: Probable deoxyhypusine synthase (376 aa).

NAD(+) contacts are provided by residues 105–109, 131–133, glutamate 137, and aspartate 238; these read SNLVS and TAG. 136-137 is a spermidine binding site; sequence EE. A spermidine-binding site is contributed by aspartate 243. Glycine 283 serves as a coordination point for NAD(+). Histidine 288 provides a ligand contact to spermidine. Position 308–309 (308–309) interacts with NAD(+); it reads TG. Residues 314–316 and 323–329 contribute to the spermidine site; these read GSD and EAVSWGK. Lysine 329 (nucleophile) is an active-site residue. 342-343 contacts NAD(+); that stretch reads EA.

Belongs to the deoxyhypusine synthase family. NAD(+) is required as a cofactor.

It catalyses the reaction [eIF5A protein]-L-lysine + spermidine = [eIF5A protein]-deoxyhypusine + propane-1,3-diamine. It functions in the pathway protein modification; eIF5A hypusination. Functionally, catalyzes the NAD-dependent oxidative cleavage of spermidine and the subsequent transfer of the butylamine moiety of spermidine to the epsilon-amino group of a critical lysine residue of the eIF-5A precursor protein to form the intermediate deoxyhypusine residue. This is the first step of the post-translational modification of that lysine into an unusual amino acid residue named hypusine. Hypusination is unique to mature eIF-5A factor and is essential for its function. This chain is Probable deoxyhypusine synthase (dhps), found in Dictyostelium discoideum (Social amoeba).